The chain runs to 454 residues: Bifunctional protein GlmU (454 aa).

Positions 1–226 are pyrophosphorylase; sequence MSLNVVILAA…PIETEGANNR (226 aa). Residues 8 to 11, Lys-22, Gln-73, 78 to 79, 100 to 102, Gly-137, Glu-151, Asn-166, and Asn-224 contribute to the UDP-N-acetyl-alpha-D-glucosamine site; these read LAAG, GT, and YGD. Asp-102 contacts Mg(2+). Asn-224 lines the Mg(2+) pocket. The linker stretch occupies residues 227–247; the sequence is VQLAALERAYQARRAEELMLA. The interval 248-454 is N-acetyltransferase; the sequence is GANLRDPARI…GWQRPVKKPK (207 aa). UDP-N-acetyl-alpha-D-glucosamine-binding residues include Arg-330 and Lys-348. The active-site Proton acceptor is the His-360. Residues Tyr-363 and Asn-374 each contribute to the UDP-N-acetyl-alpha-D-glucosamine site. Acetyl-CoA-binding positions include Ala-377, 383–384, Ser-402, Ala-420, and Arg-437; that span reads NY.

This sequence in the N-terminal section; belongs to the N-acetylglucosamine-1-phosphate uridyltransferase family. The protein in the C-terminal section; belongs to the transferase hexapeptide repeat family. In terms of assembly, homotrimer. Mg(2+) is required as a cofactor.

It localises to the cytoplasm. It catalyses the reaction alpha-D-glucosamine 1-phosphate + acetyl-CoA = N-acetyl-alpha-D-glucosamine 1-phosphate + CoA + H(+). It carries out the reaction N-acetyl-alpha-D-glucosamine 1-phosphate + UTP + H(+) = UDP-N-acetyl-alpha-D-glucosamine + diphosphate. Its pathway is nucleotide-sugar biosynthesis; UDP-N-acetyl-alpha-D-glucosamine biosynthesis; N-acetyl-alpha-D-glucosamine 1-phosphate from alpha-D-glucosamine 6-phosphate (route II): step 2/2. The protein operates within nucleotide-sugar biosynthesis; UDP-N-acetyl-alpha-D-glucosamine biosynthesis; UDP-N-acetyl-alpha-D-glucosamine from N-acetyl-alpha-D-glucosamine 1-phosphate: step 1/1. It functions in the pathway bacterial outer membrane biogenesis; LPS lipid A biosynthesis. Catalyzes the last two sequential reactions in the de novo biosynthetic pathway for UDP-N-acetylglucosamine (UDP-GlcNAc). The C-terminal domain catalyzes the transfer of acetyl group from acetyl coenzyme A to glucosamine-1-phosphate (GlcN-1-P) to produce N-acetylglucosamine-1-phosphate (GlcNAc-1-P), which is converted into UDP-GlcNAc by the transfer of uridine 5-monophosphate (from uridine 5-triphosphate), a reaction catalyzed by the N-terminal domain. This chain is Bifunctional protein GlmU, found in Shewanella amazonensis (strain ATCC BAA-1098 / SB2B).